A 195-amino-acid polypeptide reads, in one-letter code: UPF0316 protein Pcar_2434 (195 aa).

3 consecutive transmembrane segments (helical) span residues 13–33 (LFLLPLLVFFARIIDVSIGTL), 45–65 (WAGVLGFFESLIWVLAISQVM), and 71–91 (VWTYIAFALGFATGNYVGVLI).

Belongs to the UPF0316 family.

The protein resides in the cell membrane. This Syntrophotalea carbinolica (strain DSM 2380 / NBRC 103641 / GraBd1) (Pelobacter carbinolicus) protein is UPF0316 protein Pcar_2434.